A 245-amino-acid chain; its full sequence is Probable phosphatase YPTB2019 (245 aa).

Zn(2+) is bound by residues His7, His9, His15, His40, Glu73, His101, His131, Asp192, and His194.

It belongs to the PHP family. As to quaternary structure, homotrimer. The cofactor is Zn(2+).

The chain is Probable phosphatase YPTB2019 from Yersinia pseudotuberculosis serotype I (strain IP32953).